Reading from the N-terminus, the 385-residue chain is GTP cyclohydrolase 1 type 2 homolog (385 aa).

Residues His64, His65, Asp103, His333, and Glu337 each coordinate a divalent metal cation.

The protein belongs to the GTP cyclohydrolase I type 2/NIF3 family. In terms of assembly, homohexamer.

This is GTP cyclohydrolase 1 type 2 homolog from Mycobacterium leprae (strain TN).